Consider the following 321-residue polypeptide: Phospho-N-acetylmuramoyl-pentapeptide-transferase (321 aa).

Helical transmembrane passes span 1-21, 50-70, 76-96, 112-132, 140-160, 176-196, 200-220, 225-245, 250-270, and 300-320; these read MLFI…PILI, MGGL…IFFV, IILL…DDYI, FLAQ…FHLV, IPFT…IVFW, GLAT…SFVL, AIGA…PYNL, VFMG…ISIM, LSLL…MLQV, and VVTV…WIGV.

This sequence belongs to the glycosyltransferase 4 family. MraY subfamily. Mg(2+) is required as a cofactor.

Its subcellular location is the cell membrane. It carries out the reaction UDP-N-acetyl-alpha-D-muramoyl-L-alanyl-gamma-D-glutamyl-L-lysyl-D-alanyl-D-alanine + di-trans,octa-cis-undecaprenyl phosphate = Mur2Ac(oyl-L-Ala-gamma-D-Glu-L-Lys-D-Ala-D-Ala)-di-trans,octa-cis-undecaprenyl diphosphate + UMP. It participates in cell wall biogenesis; peptidoglycan biosynthesis. Its function is as follows. Catalyzes the initial step of the lipid cycle reactions in the biosynthesis of the cell wall peptidoglycan: transfers peptidoglycan precursor phospho-MurNAc-pentapeptide from UDP-MurNAc-pentapeptide onto the lipid carrier undecaprenyl phosphate, yielding undecaprenyl-pyrophosphoryl-MurNAc-pentapeptide, known as lipid I. This is Phospho-N-acetylmuramoyl-pentapeptide-transferase from Staphylococcus haemolyticus (strain JCSC1435).